A 410-amino-acid chain; its full sequence is Elongation factor Tu, chloroplastic (410 aa).

The tr-type G domain maps to 10–215 (KPHVNIGTIG…NVDSYIPTPE (206 aa)). The tract at residues 19-26 (GHVDHGKT) is G1. 19-26 (GHVDHGKT) provides a ligand contact to GTP. Threonine 26 is a binding site for Mg(2+). The segment at 61-65 (GITIN) is G2. The G3 stretch occupies residues 82–85 (DCPG). Residues 82 to 86 (DCPGH) and 137 to 140 (NKKD) each bind GTP. Residues 137-140 (NKKD) form a G4 region. Residues 175-177 (SAL) are G5.

This sequence belongs to the TRAFAC class translation factor GTPase superfamily. Classic translation factor GTPase family. EF-Tu/EF-1A subfamily.

It localises to the plastid. Its subcellular location is the chloroplast. It catalyses the reaction GTP + H2O = GDP + phosphate + H(+). Its function is as follows. GTP hydrolase that promotes the GTP-dependent binding of aminoacyl-tRNA to the A-site of ribosomes during protein biosynthesis. The protein is Elongation factor Tu, chloroplastic (tufA) of Oltmannsiellopsis viridis (Marine flagellate).